Reading from the N-terminus, the 316-residue chain is Pantothenate kinase (316 aa).

95-102 (GSVAVGKS) is a binding site for ATP.

Belongs to the prokaryotic pantothenate kinase family.

Its subcellular location is the cytoplasm. The catalysed reaction is (R)-pantothenate + ATP = (R)-4'-phosphopantothenate + ADP + H(+). The protein operates within cofactor biosynthesis; coenzyme A biosynthesis; CoA from (R)-pantothenate: step 1/5. The polypeptide is Pantothenate kinase (Shewanella woodyi (strain ATCC 51908 / MS32)).